A 716-amino-acid chain; its full sequence is Radial spoke head protein 4 homolog A (716 aa).

Disordered stretches follow at residues Met-1–Arg-164, Glu-375–Phe-410, Gly-506–Asn-526, and Leu-697–Asp-716. Residues Lys-8–Glu-25 are compositionally biased toward basic and acidic residues. Low complexity-rich tracts occupy residues Ala-29–Pro-42, Gln-54–Arg-66, and Ser-80–Ala-100. A compositionally biased stretch (polar residues) spans His-140–Pro-156. A compositionally biased stretch (acidic residues) spans Glu-375 to Glu-389. A Phosphoserine modification is found at Ser-396. 2 stretches are compositionally biased toward acidic residues: residues Gly-506–Ala-516 and Glu-701–Asp-716.

This sequence belongs to the flagellar radial spoke RSP4/6 family. In terms of assembly, interacts with RSPH6A. In terms of tissue distribution, expressed in trachea, lungs, and testes. Very strong expression is detected in nasal brushings.

Its subcellular location is the cytoplasm. The protein resides in the cytoskeleton. It localises to the cilium axoneme. It is found in the cell projection. The protein localises to the cilium. Its function is as follows. Component of the axonemal radial spoke head which plays an important role in ciliary motility. Essential for triplet radial spokes (RS1, RS2 and RS3) head assembly in the motile cilia. This is Radial spoke head protein 4 homolog A (RSPH4A) from Homo sapiens (Human).